The primary structure comprises 142 residues: Cell wall-binding protein YqgA (142 aa).

An N-terminal signal peptide occupies residues Met1–Ala28.

Found in a complex with F(1)F(0) ATP synthase and SpoIIIJ and YqjG.

The protein localises to the secreted. It is found in the cell wall. This chain is Cell wall-binding protein YqgA (yqgA), found in Bacillus subtilis (strain 168).